The sequence spans 221 residues: uncharacterized protein (221 aa).

Residues 1–30 (MVPPNPAHQPARRTQPQLQPQSQPRAQPLP) are disordered. The segment covering 12–25 (RRTQPQLQPQSQPR) has biased composition (polar residues). The helical transmembrane segment at 37-57 (VLCIIVALVLLGLLVGLAILI) threads the bilayer.

Its subcellular location is the membrane. This is an uncharacterized protein from Arabidopsis thaliana (Mouse-ear cress).